The following is a 148-amino-acid chain: Lysozyme-like protein 6 (148 aa).

A signal peptide spans 1 to 19 (MLKALFICVASCLLVVNDG). In terms of domain architecture, C-type lysozyme spans 20-148 (NIIHRCSLAK…SYWMTGCHLG (129 aa)). Disulfide bonds link Cys25–Cys145, Cys49–Cys133, Cys83–Cys98, and Cys94–Cys112. The active site involves Glu54. Asn58 carries an N-linked (GlcNAc...) asparagine glycan. Asp71 is a catalytic residue.

This sequence belongs to the glycosyl hydrolase 22 family. As to quaternary structure, monomer. Expressed strongly in testis and epididymis and weakly in seminal vesicle, vas deferens, kidney and spleen. Highly expressed in primary spermatocytes and round spermatids (at protein level).

It localises to the secreted. The protein localises to the cell surface. It is found in the cell projection. Its subcellular location is the cilium. The protein resides in the flagellum. It catalyses the reaction Hydrolysis of (1-&gt;4)-beta-linkages between N-acetylmuramic acid and N-acetyl-D-glucosamine residues in a peptidoglycan and between N-acetyl-D-glucosamine residues in chitodextrins.. May be involved sperm-egg plasma membrane adhesion and fusion during fertilization. Exhibits bacteriolytic activity in vitro against Micrococcus luteus and Staphylococcus aureus. Shows weak bacteriolytic activity against Gram-positive bacteria at physiological pH. Bacteriolytic activity is pH-dependent, with a maximum at around pH 5.6. The sequence is that of Lysozyme-like protein 6 (Lyzl6) from Mus musculus (Mouse).